Reading from the N-terminus, the 421-residue chain is Acetylglutamate kinase (421 aa).

Positions 1–252 (MASTKEISQY…PLESSVSITR (252 aa)) are acetylglutamate kinase. Substrate is bound by residues 59–60 (AG), Arg81, and Asn170. Positions 274–420 (ERVIRATTWK…HCAQHPPTLI (147 aa)) constitute an N-acetyltransferase domain.

The protein in the N-terminal section; belongs to the acetylglutamate kinase family. ArgB subfamily.

It localises to the cytoplasm. It catalyses the reaction N-acetyl-L-glutamate + ATP = N-acetyl-L-glutamyl 5-phosphate + ADP. It functions in the pathway amino-acid biosynthesis; L-arginine biosynthesis; N(2)-acetyl-L-ornithine from L-glutamate: step 2/4. The protein is Acetylglutamate kinase (argB) of Xylella fastidiosa (strain 9a5c).